Reading from the N-terminus, the 500-residue chain is Lysine--tRNA ligase (500 aa).

Mg(2+) is bound by residues Glu-410 and Glu-417.

It belongs to the class-II aminoacyl-tRNA synthetase family. Homodimer. It depends on Mg(2+) as a cofactor.

It localises to the cytoplasm. It carries out the reaction tRNA(Lys) + L-lysine + ATP = L-lysyl-tRNA(Lys) + AMP + diphosphate. The polypeptide is Lysine--tRNA ligase (Pseudomonas putida (strain ATCC 47054 / DSM 6125 / CFBP 8728 / NCIMB 11950 / KT2440)).